The sequence spans 342 residues: S-adenosyl-L-methionine-dependent tRNA 4-demethylwyosine synthase (342 aa).

Residues Cys-45, Cys-58, Cys-71, Cys-81, Cys-85, and Cys-88 each contribute to the [4Fe-4S] cluster site. Residues 64 to 312 (YGIHSHRCLQ…VKHLPGYHIE (249 aa)) enclose the Radical SAM core domain.

This sequence belongs to the TYW1 family. Monomer. Requires [4Fe-4S] cluster as cofactor.

The protein localises to the cytoplasm. It carries out the reaction N(1)-methylguanosine(37) in tRNA(Phe) + pyruvate + S-adenosyl-L-methionine = 4-demethylwyosine(37) in tRNA(Phe) + 5'-deoxyadenosine + L-methionine + CO2 + H2O. Component of the wyosine derivatives biosynthesis pathway that catalyzes the condensation of N-methylguanine with 2 carbon atoms from pyruvate to form the tricyclic 4-demethylwyosine (imG-14) on guanosine-37 of tRNA(Phe). The sequence is that of S-adenosyl-L-methionine-dependent tRNA 4-demethylwyosine synthase from Pyrococcus abyssi (strain GE5 / Orsay).